The primary structure comprises 73 residues: Large ribosomal subunit protein bL31 (73 aa).

Cys-16, Cys-18, Cys-37, and Cys-40 together coordinate Zn(2+).

Belongs to the bacterial ribosomal protein bL31 family. Type A subfamily. Part of the 50S ribosomal subunit. Requires Zn(2+) as cofactor.

In terms of biological role, binds the 23S rRNA. This chain is Large ribosomal subunit protein bL31, found in Marinobacter nauticus (strain ATCC 700491 / DSM 11845 / VT8) (Marinobacter aquaeolei).